Consider the following 262-residue polypeptide: 3-deoxy-manno-octulosonate cytidylyltransferase (262 aa).

Belongs to the KdsB family.

The protein localises to the cytoplasm. The enzyme catalyses 3-deoxy-alpha-D-manno-oct-2-ulosonate + CTP = CMP-3-deoxy-beta-D-manno-octulosonate + diphosphate. The protein operates within nucleotide-sugar biosynthesis; CMP-3-deoxy-D-manno-octulosonate biosynthesis; CMP-3-deoxy-D-manno-octulosonate from 3-deoxy-D-manno-octulosonate and CTP: step 1/1. It functions in the pathway bacterial outer membrane biogenesis; lipopolysaccharide biosynthesis. Functionally, activates KDO (a required 8-carbon sugar) for incorporation into bacterial lipopolysaccharide in Gram-negative bacteria. This is 3-deoxy-manno-octulosonate cytidylyltransferase from Acidovorax sp. (strain JS42).